Here is a 123-residue protein sequence, read N- to C-terminus: Protein LLP homolog (123 aa).

Basic residues predominate over residues 1-21; the sequence is MAKSLRSKWKRKMRAEKRKKN. 2 disordered regions span residues 1–22 and 61–123; these read MAKS…KKNA and DLDV…KLAW. Over residues 70–89 the composition is skewed to basic and acidic residues; the sequence is ESSKMDTELKRNKKNLRDQH. Over residues 100-123 the composition is skewed to basic residues; the sequence is QQKKLKSQCGKKKGKSKQAKKLAW.

It belongs to the learning-associated protein family.

It localises to the nucleus. It is found in the nucleolus. Its subcellular location is the chromosome. Its function is as follows. Regulates dendritic and spine growth and synaptic transmission. The chain is Protein LLP homolog (llph) from Xenopus laevis (African clawed frog).